A 191-amino-acid chain; its full sequence is MNKEAYIQMFKDTDALLEGHFLLSSGKHSAKYLQCAKVLQYPNLAEMICRDLAEYFKDQQIDVVIGPALGAVTLSYELARQLNCRSIFAEREDGIMKLRRGFKIEEGEKVLVVEDVITTGGSVKEIIEIVKEYKGEIVAVAGIVDRSGGKVGLGYPLKTLLTLNIETYEPDECPLCGEGIPIVKPGSRKVK.

Residue 114–122 (EDVITTGGS) participates in 5-phospho-alpha-D-ribose 1-diphosphate binding. Positions 118 and 146 each coordinate orotate.

It belongs to the purine/pyrimidine phosphoribosyltransferase family. PyrE subfamily. In terms of assembly, homodimer. Mg(2+) is required as a cofactor.

The enzyme catalyses orotidine 5'-phosphate + diphosphate = orotate + 5-phospho-alpha-D-ribose 1-diphosphate. The protein operates within pyrimidine metabolism; UMP biosynthesis via de novo pathway; UMP from orotate: step 1/2. Its function is as follows. Catalyzes the transfer of a ribosyl phosphate group from 5-phosphoribose 1-diphosphate to orotate, leading to the formation of orotidine monophosphate (OMP). In Caldicellulosiruptor saccharolyticus (strain ATCC 43494 / DSM 8903 / Tp8T 6331), this protein is Orotate phosphoribosyltransferase.